The sequence spans 502 residues: Glutamate--tRNA ligase (502 aa).

The 'HIGH' region motif lies at 9–19; it reads PSPTGFPHVGT. The 'KMSKS' region motif lies at 250 to 254; it reads KLSKR. K253 is a binding site for ATP.

Belongs to the class-I aminoacyl-tRNA synthetase family. Glutamate--tRNA ligase type 1 subfamily. In terms of assembly, monomer.

It localises to the cytoplasm. The catalysed reaction is tRNA(Glu) + L-glutamate + ATP = L-glutamyl-tRNA(Glu) + AMP + diphosphate. Its function is as follows. Catalyzes the attachment of glutamate to tRNA(Glu) in a two-step reaction: glutamate is first activated by ATP to form Glu-AMP and then transferred to the acceptor end of tRNA(Glu). The protein is Glutamate--tRNA ligase of Acinetobacter baumannii (strain SDF).